A 911-amino-acid polypeptide reads, in one-letter code: Protein translocase subunit SecA (911 aa).

ATP contacts are provided by residues glutamine 86, 104–108, and aspartate 512; that span reads GEGKT. Zn(2+) contacts are provided by cysteine 895, cysteine 897, cysteine 906, and histidine 907.

It belongs to the SecA family. In terms of assembly, monomer and homodimer. Part of the essential Sec protein translocation apparatus which comprises SecA, SecYEG and auxiliary proteins SecDF-YajC and YidC. Zn(2+) is required as a cofactor.

It localises to the cell inner membrane. The protein localises to the cytoplasm. The catalysed reaction is ATP + H2O + cellular proteinSide 1 = ADP + phosphate + cellular proteinSide 2.. Functionally, part of the Sec protein translocase complex. Interacts with the SecYEG preprotein conducting channel. Has a central role in coupling the hydrolysis of ATP to the transfer of proteins into and across the cell membrane, serving both as a receptor for the preprotein-SecB complex and as an ATP-driven molecular motor driving the stepwise translocation of polypeptide chains across the membrane. This is Protein translocase subunit SecA from Bordetella bronchiseptica (strain ATCC BAA-588 / NCTC 13252 / RB50) (Alcaligenes bronchisepticus).